A 118-amino-acid chain; its full sequence is Large ribosomal subunit protein uL24 (118 aa).

Belongs to the universal ribosomal protein uL24 family. Part of the 50S ribosomal subunit.

Functionally, one of two assembly initiator proteins, it binds directly to the 5'-end of the 23S rRNA, where it nucleates assembly of the 50S subunit. In terms of biological role, one of the proteins that surrounds the polypeptide exit tunnel on the outside of the subunit. The polypeptide is Large ribosomal subunit protein uL24 (Parasynechococcus marenigrum (strain WH8102)).